A 523-amino-acid polypeptide reads, in one-letter code: Protein nucleotidyltransferase YdiU (523 aa).

8 residues coordinate ATP: G101, G103, R104, K128, D140, G141, R198, and R205. Catalysis depends on D275, which acts as the Proton acceptor. Positions 276 and 285 each coordinate Mg(2+). Position 285 (D285) interacts with ATP.

Belongs to the SELO family. Requires Mg(2+) as cofactor. Mn(2+) is required as a cofactor.

It carries out the reaction L-seryl-[protein] + ATP = 3-O-(5'-adenylyl)-L-seryl-[protein] + diphosphate. The catalysed reaction is L-threonyl-[protein] + ATP = 3-O-(5'-adenylyl)-L-threonyl-[protein] + diphosphate. The enzyme catalyses L-tyrosyl-[protein] + ATP = O-(5'-adenylyl)-L-tyrosyl-[protein] + diphosphate. It catalyses the reaction L-histidyl-[protein] + UTP = N(tele)-(5'-uridylyl)-L-histidyl-[protein] + diphosphate. It carries out the reaction L-seryl-[protein] + UTP = O-(5'-uridylyl)-L-seryl-[protein] + diphosphate. The catalysed reaction is L-tyrosyl-[protein] + UTP = O-(5'-uridylyl)-L-tyrosyl-[protein] + diphosphate. In terms of biological role, nucleotidyltransferase involved in the post-translational modification of proteins. It can catalyze the addition of adenosine monophosphate (AMP) or uridine monophosphate (UMP) to a protein, resulting in modifications known as AMPylation and UMPylation. This Aromatoleum aromaticum (strain DSM 19018 / LMG 30748 / EbN1) (Azoarcus sp. (strain EbN1)) protein is Protein nucleotidyltransferase YdiU.